We begin with the raw amino-acid sequence, 250 residues long: Flagellar L-ring protein (250 aa).

An N-terminal signal peptide occupies residues 1-32 (MTRINTNTQKNNNTKFSKLILGVMVSSIVLSG). Cysteine 33 carries the N-palmitoyl cysteine lipid modification. Cysteine 33 carries the S-diacylglycerol cysteine lipid modification.

Belongs to the FlgH family. As to quaternary structure, the basal body constitutes a major portion of the flagellar organelle and consists of four rings (L,P,S, and M) mounted on a central rod.

Its subcellular location is the cell outer membrane. It localises to the bacterial flagellum basal body. Assembles around the rod to form the L-ring and probably protects the motor/basal body from shearing forces during rotation. The protein is Flagellar L-ring protein of Hydrogenovibrio crunogenus (strain DSM 25203 / XCL-2) (Thiomicrospira crunogena).